Here is a 341-residue protein sequence, read N- to C-terminus: Ribosomal RNA small subunit methyltransferase H (341 aa).

Residues 47-49 (GGY), Asp-64, Phe-91, Asp-109, and Gln-116 contribute to the S-adenosyl-L-methionine site.

This sequence belongs to the methyltransferase superfamily. RsmH family.

It localises to the cytoplasm. The enzyme catalyses cytidine(1402) in 16S rRNA + S-adenosyl-L-methionine = N(4)-methylcytidine(1402) in 16S rRNA + S-adenosyl-L-homocysteine + H(+). In terms of biological role, specifically methylates the N4 position of cytidine in position 1402 (C1402) of 16S rRNA. The protein is Ribosomal RNA small subunit methyltransferase H of Rhizobium leguminosarum bv. trifolii (strain WSM2304).